We begin with the raw amino-acid sequence, 389 residues long: MGTNLSVPNPLGFFPDHQLDPAFKANSENPDWDLNPHKDNWPDAHKVGVGAFGPGFTPPHGGLLGWSPQAQGILTSVPAAPPPASTNRQSGRQPTPLSPPLRDTHPQAMQWNSTTFHQTLQDPRVRALYFPAGGSSSGTVSPAQNTVSAISSILSKTGDPVPNMENIASGLLGPLLVLQAGFFLLTKILTIPQSLDSWWTSLNFLGGTPVCLGQNSQSQISSHSPTCCPPICPGYRWMCLRRFIIFLCILLLCLIFLLVLLDYQGMLPVCPLIPGSSTTSTGPCKTCTTPAQGTSMFPSCCCTKPMDGNCTCIPIPSSWAFAKYLWEWASVRFSWLSLLVPFVQWFVGLSPTVWLSVIWMMWYWGPSLYNILSPFMPLLPIFFCLWVYI.

The residue at position 1 (Met-1) is an N-acetylmethionine. A lipid anchor (N-myristoyl glycine; by host) is attached at Gly-2. A pre-S1 region spans residues 2–108 (GTNLSVPNPL…PPLRDTHPQA (107 aa)). Positions 2-163 (GTNLSVPNPL…LSKTGDPVPN (162 aa)) are pre-S. The Virion surface; in external conformation segment spans residues 2–170 (GTNLSVPNPL…VPNMENIASG (169 aa)). Residues 2–242 (GTNLSVPNPL…PGYRWMCLRR (241 aa)) are Intravirion; in internal conformation-facing. Residues 73-107 (ILTSVPAAPPPASTNRQSGRQPTPLSPPLRDTHPQ) form a disordered region. Residues 85–95 (STNRQSGRQPT) are compositionally biased toward polar residues. Positions 109 to 163 (MQWNSTTFHQTLQDPRVRALYFPAGGSSSGTVSPAQNTVSAISSILSKTGDPVPN) are pre-S2. A helical transmembrane segment spans residues 171–191 (LLGPLLVLQAGFFLLTKILTI). At 192–242 (PQSLDSWWTSLNFLGGTPVCLGQNSQSQISSHSPTCCPPICPGYRWMCLRR) the chain is on the intravirion; in external conformation side. The helical transmembrane segment at 243–263 (FIIFLCILLLCLIFLLVLLDY) threads the bilayer. Topologically, residues 264 to 337 (QGMLPVCPLI…WASVRFSWLS (74 aa)) are virion surface. N-linked (GlcNAc...) asparagine; by host glycosylation occurs at Asn-309. A helical transmembrane segment spans residues 338 to 358 (LLVPFVQWFVGLSPTVWLSVI). Over 359–364 (WMMWYW) the chain is Intravirion. A helical transmembrane segment spans residues 365 to 387 (GPSLYNILSPFMPLLPIFFCLWV). The Virion surface portion of the chain corresponds to 388 to 389 (YI).

It belongs to the orthohepadnavirus major surface antigen family. Interacts (via its myristoylated pre-S1 region) with the host SLC10A1/NTCP; this interaction is essential for viral entry. In terms of assembly, in its internal form (Li-HBsAg), interacts with the capsid protein and with the isoform S. Interacts with host chaperone CANX. As to quaternary structure, associates with host chaperone CANX through its pre-S2 N glycan; this association may be essential for isoform M proper secretion. Interacts with isoform L. Interacts with the antigens of satellite virus HDV (HDVAgs); this interaction is required for encapsidation of HDV genomic RNA. Post-translationally, isoform M is N-terminally acetylated by host at a ratio of 90%, and N-glycosylated by host at the pre-S2 region. Myristoylated; this modification is essential for its interaction with the host protein SLC10A1/NTCP.

The protein localises to the virion membrane. Its function is as follows. The large envelope protein exists in two topological conformations, one which is termed 'external' or Le-HBsAg and the other 'internal' or Li-HBsAg. In its external conformation the protein attaches the virus to cell receptors and thereby initiating infection. This interaction determines the species specificity and liver tropism. This attachment induces virion internalization predominantly through caveolin-mediated endocytosis. The large envelope protein also assures fusion between virion membrane and endosomal membrane. In its internal conformation the protein plays a role in virion morphogenesis and mediates the contact with the nucleocapsid like a matrix protein. The middle envelope protein plays an important role in the budding of the virion. It is involved in the induction of budding in a nucleocapsid independent way. In this process the majority of envelope proteins bud to form subviral lipoprotein particles of 22 nm of diameter that do not contain a nucleocapsid. This is Large envelope protein from Hepatitis B virus genotype B1 subtype adw (isolate Japan/pJDW233/1988) (HBV-B).